A 60-amino-acid polypeptide reads, in one-letter code: Metallothionein (60 aa).

Residues 1–28 (MDPCECSKGGTCNCGGSCTCTNCSCTTC) form a beta region. Residues Cys-4, Cys-6, Cys-12, Cys-14, Cys-18, Cys-20, Cys-23, Cys-25, Cys-28, Cys-32, Cys-33, Cys-35, Cys-36, Cys-40, Cys-43, Cys-47, Cys-49, Cys-54, Cys-58, and Cys-59 each coordinate a divalent metal cation. The tract at residues 29 to 60 (KKSCCPCCPSGCPKCASGCVCKGKTCDAACCQ) is alpha.

Belongs to the metallothionein superfamily. Type 1 family.

Its function is as follows. Metallothioneins have a high content of cysteine residues that bind various heavy metals. This chain is Metallothionein (mt), found in Perca fluviatilis (European perch).